The chain runs to 359 residues: MSKQILILAGDGIGPEIVGAAEQVLTKVNEKFELGLTWEHGLLGGSAIDAHGEPYPAVTSEQAKKADAILLGAVGGPKWDTIERSIRPERGLLKIRSELNLFANLRPALLYPQLADASSLKPEIVAGLDILIVRELTGGIYFGQPRGIRELENGEKQGYNTDVYSESEIKRIAKVAFELAALRGSKVCSVDKANVLEVTELWKQTVTELQQAQYPNIQLSHMYVDNAAMQLVRAPKQFDVIVTGNLFGDILSDEAAMLTGSIGMLPSASLDENGKGMYEPCHGSAPDIAGQNVANPLATILSVAMMLRYTFREEAAAKAIEDAVGQVLDQGLRTADIMSEGMQRVGTVEMGQAVVAALA.

Residue 76-89 participates in NAD(+) binding; sequence GPKWDTIERSIRPE. Substrate is bound by residues R96, R106, R134, and D225. The Mg(2+) site is built by D225, D249, and D253. 283–295 is an NAD(+) binding site; that stretch reads GSAPDIAGQNVAN.

Belongs to the isocitrate and isopropylmalate dehydrogenases family. LeuB type 1 subfamily. As to quaternary structure, homodimer. The cofactor is Mg(2+). Mn(2+) serves as cofactor.

The protein localises to the cytoplasm. The enzyme catalyses (2R,3S)-3-isopropylmalate + NAD(+) = 4-methyl-2-oxopentanoate + CO2 + NADH. It participates in amino-acid biosynthesis; L-leucine biosynthesis; L-leucine from 3-methyl-2-oxobutanoate: step 3/4. Catalyzes the oxidation of 3-carboxy-2-hydroxy-4-methylpentanoate (3-isopropylmalate) to 3-carboxy-4-methyl-2-oxopentanoate. The product decarboxylates to 4-methyl-2 oxopentanoate. The chain is 3-isopropylmalate dehydrogenase from Acinetobacter baylyi (strain ATCC 33305 / BD413 / ADP1).